A 285-amino-acid polypeptide reads, in one-letter code: Putative pyruvate, phosphate dikinase regulatory protein (285 aa).

ADP is bound at residue 165–172; it reads GVSRTSKT.

It belongs to the pyruvate, phosphate/water dikinase regulatory protein family. PDRP subfamily.

The enzyme catalyses N(tele)-phospho-L-histidyl/L-threonyl-[pyruvate, phosphate dikinase] + ADP = N(tele)-phospho-L-histidyl/O-phospho-L-threonyl-[pyruvate, phosphate dikinase] + AMP + H(+). The catalysed reaction is N(tele)-phospho-L-histidyl/O-phospho-L-threonyl-[pyruvate, phosphate dikinase] + phosphate + H(+) = N(tele)-phospho-L-histidyl/L-threonyl-[pyruvate, phosphate dikinase] + diphosphate. In terms of biological role, bifunctional serine/threonine kinase and phosphorylase involved in the regulation of the pyruvate, phosphate dikinase (PPDK) by catalyzing its phosphorylation/dephosphorylation. The sequence is that of Putative pyruvate, phosphate dikinase regulatory protein from Lactobacillus delbrueckii subsp. bulgaricus (strain ATCC BAA-365 / Lb-18).